The chain runs to 113 residues: Large ribosomal subunit protein eL30 (113 aa).

Belongs to the eukaryotic ribosomal protein eL30 family.

The chain is Large ribosomal subunit protein eL30 (RpL30) from Spodoptera frugiperda (Fall armyworm).